A 197-amino-acid polypeptide reads, in one-letter code: RSDPTQIEVKLFNRWSFDDVQLSDVSLIDYIGVVPSKHATYVPHTAGRYSVKRFRKAQCPIVERLTNSLMMHGRNNGKKLMAVRIIKHAMEIIHLLTDQNPIQVIVDAVVNSGPREDATRIGSAGVVRRQAVDISPLRRVNQAIYLLTTGAREAAFRNIKSIAECLADELINAAKGSSNSYAIKKKDEIERVAKANR.

Belongs to the universal ribosomal protein uS7 family.

This Cicer arietinum (Chickpea) protein is Small ribosomal subunit protein uS7 (RPS5).